Reading from the N-terminus, the 332-residue chain is Autoinducer 2 import system permease protein LsrD (332 aa).

Transmembrane regions (helical) follow at residues Tyr-7 to Ile-27, Ile-45 to Ile-65, Thr-70 to Leu-90, Ala-91 to Ile-111, Leu-118 to Met-138, Phe-162 to Leu-182, Val-216 to Gly-236, Ser-240 to Asn-260, Ile-261 to Leu-281, and Ala-288 to Val-308.

Belongs to the binding-protein-dependent transport system permease family. AraH/RbsC subfamily. In terms of assembly, the complex is composed of two ATP-binding proteins (LsrA), two transmembrane proteins (LsrC and LsrD) and a solute-binding protein (LsrB).

It is found in the cell inner membrane. In terms of biological role, part of the ABC transporter complex LsrABCD involved in autoinducer 2 (AI-2) import. Probably responsible for the translocation of the substrate across the membrane. This chain is Autoinducer 2 import system permease protein LsrD (lsrD), found in Salmonella paratyphi B (strain ATCC BAA-1250 / SPB7).